We begin with the raw amino-acid sequence, 539 residues long: Effector protein hopAB1 (539 aa).

Disordered regions lie at residues 1–93 (MPGI…PEAQ), 163–220 (QTVR…RHPQ), 230–249 (ASAA…LRRL), and 315–336 (RQTT…SGRR). Residues 18–31 (TDGEPVTEREHDSS) are compositionally biased toward basic and acidic residues. Residues 181–194 (SSSGSSQRSLIGRS) show a composition bias toward low complexity.

It belongs to the HopAB family.

Its subcellular location is the secreted. Effector protein that plays different roles depending on the species and plant cultivars that interact with the pathogen. Acts as a virulence determinant by enhancing the development of disease symptoms and bacterial growth. Acts as an avirulence factor by eliciting hypersensitive response (HR) and plant resistance. The chain is Effector protein hopAB1 (hopAB1) from Pseudomonas savastanoi pv. phaseolicola (strain 1448A / Race 6) (Pseudomonas syringae pv. phaseolicola (strain 1448A / Race 6)).